Here is a 308-residue protein sequence, read N- to C-terminus: Cobalamin biosynthesis protein CobD (308 aa).

The next 6 helical transmembrane spans lie at 1–21 (MEIL…GDPP), 50–70 (FVYG…PVYF), 71–91 (LLDW…AILF), 151–171 (IGDG…PGVM), 202–222 (VLNF…SFFG), and 284–304 (LVLI…VIYF).

This sequence belongs to the CobD/CbiB family.

The protein resides in the cell membrane. Its pathway is cofactor biosynthesis; adenosylcobalamin biosynthesis. Its function is as follows. Converts cobyric acid to cobinamide by the addition of aminopropanol on the F carboxylic group. This is Cobalamin biosynthesis protein CobD from Dehalococcoides mccartyi (strain CBDB1).